The following is a 549-amino-acid chain: Glucose-6-phosphate isomerase (549 aa).

N6-acetyllysine is present on residues K80, K228, and K234. E355 acts as the Proton donor in catalysis. Catalysis depends on residues H386 and K514.

The protein belongs to the GPI family.

The protein localises to the cytoplasm. The enzyme catalyses alpha-D-glucose 6-phosphate = beta-D-fructose 6-phosphate. It participates in carbohydrate biosynthesis; gluconeogenesis. It functions in the pathway carbohydrate degradation; glycolysis; D-glyceraldehyde 3-phosphate and glycerone phosphate from D-glucose: step 2/4. Functionally, catalyzes the reversible isomerization of glucose-6-phosphate to fructose-6-phosphate. The protein is Glucose-6-phosphate isomerase of Escherichia coli (strain SMS-3-5 / SECEC).